The chain runs to 126 residues: Fluoride-specific ion channel FluC 2 (126 aa).

Helical transmembrane passes span 5-25 (TALT…GSVL), 44-64 (GTLT…GLAL), 68-88 (AALL…TWML), and 99-119 (MVSA…AALL). 2 residues coordinate Na(+): Gly78 and Thr81.

The protein belongs to the fluoride channel Fluc/FEX (TC 1.A.43) family.

It is found in the cell membrane. The enzyme catalyses fluoride(in) = fluoride(out). Its activity is regulated as follows. Na(+) is not transported, but it plays an essential structural role and its presence is essential for fluoride channel function. Fluoride-specific ion channel. Important for reducing fluoride concentration in the cell, thus reducing its toxicity. This Mycobacterium bovis (strain ATCC BAA-935 / AF2122/97) protein is Fluoride-specific ion channel FluC 2.